A 246-amino-acid chain; its full sequence is High mobility group protein 1 (246 aa).

A DNA-binding region (HMG box) is located at residues 106 to 179 (PKKPLTVFFA…NYQREKSKYL (74 aa)). The disordered stretch occupies residues 179 to 246 (LEAKKNGTLP…KKKDKSNSSI (68 aa)). Over residues 214–227 (PVEKRPHDDDGSSE) the composition is skewed to basic and acidic residues. The segment covering 228–238 (KKKKKKKKDKK) has biased composition (basic residues).

As to quaternary structure, interacts with FPR1. Interacts with an unidentified DNA helicase. Associates with rDNA.

The protein localises to the nucleus. It is found in the nucleolus. DNA-binding protein that is probably part of the rDNA transcription apparatus. Acts synergetically with the RPA49 subunit of RNA polymerase I during rDNA transcription. May participate in mutagenesis control. The polypeptide is High mobility group protein 1 (HMO1) (Saccharomyces cerevisiae (strain ATCC 204508 / S288c) (Baker's yeast)).